The following is a 145-amino-acid chain: 3-hydroxyacyl-[acyl-carrier-protein] dehydratase FabZ (145 aa).

Histidine 48 is an active-site residue.

It belongs to the thioester dehydratase family. FabZ subfamily.

It localises to the cytoplasm. The catalysed reaction is a (3R)-hydroxyacyl-[ACP] = a (2E)-enoyl-[ACP] + H2O. Functionally, involved in unsaturated fatty acids biosynthesis. Catalyzes the dehydration of short chain beta-hydroxyacyl-ACPs and long chain saturated and unsaturated beta-hydroxyacyl-ACPs. In Stutzerimonas stutzeri (strain A1501) (Pseudomonas stutzeri), this protein is 3-hydroxyacyl-[acyl-carrier-protein] dehydratase FabZ.